The sequence spans 493 residues: Glutamyl-tRNA(Gln) amidotransferase subunit A (493 aa).

Catalysis depends on charge relay system residues K78 and S158. Residue S182 is the Acyl-ester intermediate of the active site.

It belongs to the amidase family. GatA subfamily. As to quaternary structure, heterotrimer of A, B and C subunits.

It catalyses the reaction L-glutamyl-tRNA(Gln) + L-glutamine + ATP + H2O = L-glutaminyl-tRNA(Gln) + L-glutamate + ADP + phosphate + H(+). Its function is as follows. Allows the formation of correctly charged Gln-tRNA(Gln) through the transamidation of misacylated Glu-tRNA(Gln) in organisms which lack glutaminyl-tRNA synthetase. The reaction takes place in the presence of glutamine and ATP through an activated gamma-phospho-Glu-tRNA(Gln). This Rickettsia conorii (strain ATCC VR-613 / Malish 7) protein is Glutamyl-tRNA(Gln) amidotransferase subunit A.